The sequence spans 1062 residues: Cell division control protein 7 (1062 aa).

Residues 9 to 259 (ITLGDCLGKG…TRKLLKHPWV (251 aa)) form the Protein kinase domain. Residues 15-23 (LGKGAFGAV) and Lys-38 contribute to the ATP site. The active-site Proton acceptor is Asp-131. Composition is skewed to polar residues over residues 296–310 (NRIN…QSSY) and 376–394 (AFNS…SPLS). Disordered stretches follow at residues 296 to 331 (NRIN…NWDN), 361 to 394 (NNSS…SPLS), and 1038 to 1062 (NEHK…PLTQ).

Belongs to the protein kinase superfamily. Ser/Thr protein kinase family. CDC7 subfamily. As to quaternary structure, interacts with spg1. Seems to interact with cdc11. Requires Mg(2+) as cofactor.

It catalyses the reaction L-seryl-[protein] + ATP = O-phospho-L-seryl-[protein] + ADP + H(+). The enzyme catalyses L-threonyl-[protein] + ATP = O-phospho-L-threonyl-[protein] + ADP + H(+). Functionally, protein kinase essential for cell division. Plays a key role in initiation of septum formation and cytokinesis. The protein is Cell division control protein 7 (cdc7) of Schizosaccharomyces pombe (strain 972 / ATCC 24843) (Fission yeast).